The chain runs to 480 residues: Gamma-aminobutyric acid receptor subunit rho-1 (480 aa).

A signal peptide spans 1–21 (MLAVRNMKFGIFLLWWGWVLA). The Extracellular segment spans residues 22–281 (AESTVHWPGR…LYINFTLRRH (260 aa)). The segment at 31–67 (REVHEPSKKGSRPQRQRRGAHDDAHKQGSPILKRSSD) is disordered. The span at 39–48 (KGSRPQRQRR) shows a compositional bias: basic residues. Arg-126 is a 4-aminobutanoate binding site. A glycan (N-linked (GlcNAc...) asparagine) is linked at Asn-141. Position 190 (Ser-190) interacts with 4-aminobutanoate. A disulfide bridge connects residues Cys-199 and Cys-213. Glu-218 provides a ligand contact to 4-aminobutanoate. N-linked (GlcNAc...) asparagine glycosylation is found at Asn-235 and Asn-275. A helical transmembrane segment spans residues 282–302 (IFFFLLQTYFPATLMVMLSWV). The Cytoplasmic segment spans residues 303–314 (SFWIDRRAVPAR). A helical transmembrane segment spans residues 315–335 (VPLGITTVLTMSTIITGVNAS). Residues 336–346 (MPRVSYIKAVD) lie on the Extracellular side of the membrane. Residues 347-367 (IYLWVSFVFVFLSVLEYAAVN) traverse the membrane as a helical segment. The Cytoplasmic segment spans residues 368-458 (YLTTVQERKE…MRINTHAIDK (91 aa)). Residues 459–479 (YSRIIFPAAYILFNLIYWSIF) form a helical membrane-spanning segment. A topological domain (extracellular) is located at residue Ser-480.

It belongs to the ligand-gated ion channel (TC 1.A.9) family. Gamma-aminobutyric acid receptor (TC 1.A.9.5) subfamily. GABRR1 sub-subfamily. As to quaternary structure, three rho subunits (rho-1/GBRR1, rho-2/GBRR2 and rho-3/GBRR3) coassemble either to form functional homopentamers or heteropentamers. Rho-1/GBRR1 subunits can also associate with alpha-1/GBRA1 subunits to form a functional GABAAR. Interacts with SQSTM1.

It localises to the postsynaptic cell membrane. Its subcellular location is the cell membrane. It catalyses the reaction chloride(in) = chloride(out). With respect to regulation, inhibited by TPMPA, a rho-specific antagonist. Inhibited by picrotoxin, when forming a homopentamer. In contrast with other GABAARs, rho-1 GABAAR is not inhibited by bicuculline, when forming a homopentamer. Down-regulated by external protons when forming a homopentamer. Functionally, rho subunit of the pentameric ligand-gated chloride channels responsible for mediating the effects of gamma-aminobutyric acid (GABA), the major inhibitory neurotransmitter in the brain. Rho-containing GABA-gated chloride channels are a subclass of GABA(A) receptors (GABAARs) entirely composed of rho subunits, where GABA molecules bind at the rho intersubunit interfaces. When activated by GABA, rho-GABAARs selectively allow the flow of chloride anions across the cell membrane down their electrochemical gradient. Rho-1 subunits are primarily expressed in retina where rho-1-containing GABAARs may play a role in retinal neurotransmission. Rho-1 GABAARs are also involved in neuronal tonic (extrasynaptic) and phasic (synaptic) transmission in the Purkinje neurons of the cerebellum. Rho-1 GABAARs may also contribute to the regulation of glial development in the cerebellum by controlling extrasynaptic transmission. The chain is Gamma-aminobutyric acid receptor subunit rho-1 from Rattus norvegicus (Rat).